Reading from the N-terminus, the 318-residue chain is Aldehyde oxidoreductase FAD-binding subunit PaoB (318 aa).

Positions 1–223 (MKAFTYERVN…VAVTLPPPLG (223 aa)) constitute an FAD-binding PCMH-type domain. FAD-binding positions include 26–34 (KFIAGGTNL) and threonine 108. The [4Fe-4S] cluster site is built by cysteine 119, cysteine 129, cysteine 138, and cysteine 157. The FAD site is built by aspartate 164, isoleucine 213, and lysine 230.

As to quaternary structure, heterotrimer composed of PaoA, PaoB and PaoC. It depends on FAD as a cofactor. [4Fe-4S] cluster is required as a cofactor.

It is found in the periplasm. The catalysed reaction is an aldehyde + A + H2O = a carboxylate + AH2 + H(+). With respect to regulation, the complex requires PaoD for activity. Its function is as follows. Oxidizes aldehydes to the corresponding carboxylic acids with a preference for aromatic aldehydes. It might play a role in the detoxification of aldehydes to avoid cell damage. The chain is Aldehyde oxidoreductase FAD-binding subunit PaoB from Escherichia coli (strain K12).